Reading from the N-terminus, the 834-residue chain is 1,4-alpha-glucan branching enzyme GlgB (834 aa).

Residue aspartate 511 is the Nucleophile of the active site. The Proton donor role is filled by glutamate 565.

Belongs to the glycosyl hydrolase 13 family. GlgB subfamily. As to quaternary structure, monomer.

It catalyses the reaction Transfers a segment of a (1-&gt;4)-alpha-D-glucan chain to a primary hydroxy group in a similar glucan chain.. Its pathway is glycan biosynthesis; glycogen biosynthesis. In terms of biological role, catalyzes the formation of the alpha-1,6-glucosidic linkages in glycogen by scission of a 1,4-alpha-linked oligosaccharide from growing alpha-1,4-glucan chains and the subsequent attachment of the oligosaccharide to the alpha-1,6 position. The protein is 1,4-alpha-glucan branching enzyme GlgB (glgB) of Burkholderia thailandensis (strain ATCC 700388 / DSM 13276 / CCUG 48851 / CIP 106301 / E264).